We begin with the raw amino-acid sequence, 89 residues long: Cell division topological specificity factor (89 aa).

It belongs to the MinE family.

Its function is as follows. Prevents the cell division inhibition by proteins MinC and MinD at internal division sites while permitting inhibition at polar sites. This ensures cell division at the proper site by restricting the formation of a division septum at the midpoint of the long axis of the cell. The sequence is that of Cell division topological specificity factor from Yersinia pestis bv. Antiqua (strain Angola).